Here is a 947-residue protein sequence, read N- to C-terminus: Protocadherin alpha-4 (947 aa).

Positions Met1–Ser29 are cleaved as a signal peptide. 6 Cadherin domains span residues Gln30–Phe133, Pro134–Phe242, Asp243–Leu350, Glu351–Phe455, Ala456–Leu565, and Ser573–Arg681. Residues Gln30–Asn697 lie on the Extracellular side of the membrane. Residues Cys96 and Cys102 are joined by a disulfide bond. Asn257 and Asn265 each carry an N-linked (GlcNAc...) asparagine glycan. Asn548 carries an N-linked (GlcNAc...) asparagine glycan. Residues Val698–Tyr718 traverse the membrane as a helical segment. Residues Ser719–Gln947 lie on the Cytoplasmic side of the membrane. PXXP repeat units follow at residues Pro734 to Pro737, Pro774 to Ser777, Pro796 to Pro799, Pro829 to Pro832, Pro870 to Pro873, and Pro888 to Pro891. Residues Pro734–Pro891 form a 6 X 4 AA repeats of P-X-X-P region. Positions Val738–Gln947 are required for interaction with FYN. 2 disordered regions span residues Gly761 to Tyr805 and Ile824 to Pro853. A disordered region spans residues Arg897 to Gln947. Residues Asp906–Lys920 are compositionally biased toward basic and acidic residues.

Forms homodimers in trans (molecules expressed by two different cells). Forms promiscuous heterodimers in cis (at the plasma membrane of the same cell) with other protocadherins. Interacts with FYN. As to expression, detected in brain.

It localises to the cell membrane. Functionally, calcium-dependent cell-adhesion protein involved in cells self-recognition and non-self discrimination. Thereby, it is involved in the establishment and maintenance of specific neuronal connections in the brain. The polypeptide is Protocadherin alpha-4 (Rattus norvegicus (Rat)).